A 401-amino-acid polypeptide reads, in one-letter code: Deubiquitinase and deneddylase Dub1 (401 aa).

Residues 1–11 show a composition bias toward polar residues; it reads MLSPTNSTSKT. Positions 1 to 24 are disordered; sequence MLSPTNSTSKTAPVPPRDSSKPVL. Residues 40-60 traverse the membrane as a helical segment; that stretch reads TALAVLLVVVTLGLILLFYSF. The interval 77–130 is disordered; sequence KEQPTISIPVPLPSPPLAVPRPSTPPPPVISRPSTPSAPKPSTPPPLLPKAPKP. Pro residues predominate over residues 86 to 128; the sequence is VPLPSPPLAVPRPSTPPPPVISRPSTPSAPKPSTPPPLLPKAP. Catalysis depends on residues H275, D292, and C345.

This sequence belongs to the peptidase C48 family. As to quaternary structure, binds to host NFKBIA.

Its subcellular location is the secreted. It localises to the host cell. The protein localises to the membrane. Functionally, effector proteins function to alter host cell physiology and promote bacterial survival in host tissues. This protease possesses deubiquitinating and deneddylating activities. Impairs ubiquitination and degradation of NF-kappa-B inhibitor alpha (NFKBIA), thereby preventing NF-kappa-B activation. The protein is Deubiquitinase and deneddylase Dub1 (cdu1) of Chlamydia trachomatis serovar L2 (strain ATCC VR-902B / DSM 19102 / 434/Bu).